The following is a 451-amino-acid chain: Trigger factor (451 aa).

In terms of domain architecture, PPIase FKBP-type spans 165–250; the sequence is DDKLTIDFEG…LHQIQAREAL (86 aa).

This sequence belongs to the FKBP-type PPIase family. Tig subfamily.

The protein localises to the cytoplasm. The enzyme catalyses [protein]-peptidylproline (omega=180) = [protein]-peptidylproline (omega=0). Functionally, involved in protein export. Acts as a chaperone by maintaining the newly synthesized protein in an open conformation. Functions as a peptidyl-prolyl cis-trans isomerase. In Helicobacter pylori (strain HPAG1), this protein is Trigger factor.